The primary structure comprises 146 residues: Large ribosomal subunit protein bL9 (146 aa).

It belongs to the bacterial ribosomal protein bL9 family. Part of the 50S ribosomal subunit. Contacts protein L31.

Binds to the 23S rRNA and protein L31. This chain is Large ribosomal subunit protein bL9 (rplI), found in Deinococcus radiodurans (strain ATCC 13939 / DSM 20539 / JCM 16871 / CCUG 27074 / LMG 4051 / NBRC 15346 / NCIMB 9279 / VKM B-1422 / R1).